A 388-amino-acid polypeptide reads, in one-letter code: Succinate--CoA ligase [ADP-forming] subunit beta (388 aa).

In terms of domain architecture, ATP-grasp spans Lys-9–His-244. ATP contacts are provided by residues Lys-46, Gly-53–Gly-55, Glu-99, Thr-102, and Glu-107. Mg(2+) contacts are provided by Asn-199 and Asp-213. Residues Asn-264 and Gly-321–Val-323 each bind substrate.

Belongs to the succinate/malate CoA ligase beta subunit family. In terms of assembly, heterotetramer of two alpha and two beta subunits. It depends on Mg(2+) as a cofactor.

It catalyses the reaction succinate + ATP + CoA = succinyl-CoA + ADP + phosphate. The catalysed reaction is GTP + succinate + CoA = succinyl-CoA + GDP + phosphate. It participates in carbohydrate metabolism; tricarboxylic acid cycle; succinate from succinyl-CoA (ligase route): step 1/1. Functionally, succinyl-CoA synthetase functions in the citric acid cycle (TCA), coupling the hydrolysis of succinyl-CoA to the synthesis of either ATP or GTP and thus represents the only step of substrate-level phosphorylation in the TCA. The beta subunit provides nucleotide specificity of the enzyme and binds the substrate succinate, while the binding sites for coenzyme A and phosphate are found in the alpha subunit. This is Succinate--CoA ligase [ADP-forming] subunit beta from Aeromonas salmonicida (strain A449).